A 524-amino-acid polypeptide reads, in one-letter code: Fusicoccadiene C-8 hydroxylase (524 aa).

The chain crosses the membrane as a helical span at residues 16-36; the sequence is LQLLCIGPLVYACVSFIIKIV. N-linked (GlcNAc...) asparagine glycans are attached at residues asparagine 126 and asparagine 344. Cysteine 465 provides a ligand contact to heme. N-linked (GlcNAc...) asparagine glycosylation is present at asparagine 496.

This sequence belongs to the cytochrome P450 family. Heme is required as a cofactor.

The protein localises to the membrane. The protein operates within mycotoxin biosynthesis. Functionally, cytochrome P450 monooxygenase; part of the 2 gene clusters that mediate the biosynthesis of fusicoccins, diterpene glucosides that display phytohormone-like activity and function as potent activators of plasma membrane H(+)-ATPases in plants by modifying 14-3-3 proteins and cause the plant disease constriction canker. The first step in the pathway is performed by the fusicoccadiene synthase PaFS that possesses both prenyl transferase and terpene cyclase activity, converting isopentenyl diphosphate and dimethylallyl diphosphate into geranylgeranyl diphosphate (GGDP) and successively converting GGDP into fusicocca-2,10(14)-diene, a precursor for fusicoccin H. The second step is the oxidation at the C-8 position by the cytochrome P450 monooxygenase PaP450-2 to yield fusicocca-2,10(14)-diene-8-beta-ol. The cytochrome P450 monooxygenase PaP450-1 then catalyzes the hydroxylation at the C-16 position to produce fusicocca-2,10(14)-diene-8-beta,16-diol. The dioxygenase fc-dox then catalyzes the 16-oxydation of fusicocca-2,10(14)-diene-8-beta,16-diol to yield an aldehyde (8-beta-hydroxyfusicocca-1,10(14)-dien-16-al). The short-chain dehydrogenase/reductase fc-sdr catalyzes the reduction of the aldehyde to yield fusicocca-1,10(14)-diene-8-beta,16-diol. The next step is the hydroxylation at C-9 performed by the cytochrome P450 monooxygenase PaP450-3 that leads to fusicoccin H aglycon which is glycosylated to fusicoccin H by the O-glycosyltransferase PaGT. Hydroxylation at C-12 by the cytochrome P450 monooxygenase PaP450-4 leads then to the production of fusicoccin Q and is followed by methylation by the O-methyltransferase PaMT to yield fusicoccin P. Fusicoccin P is further converted to fusicoccin J via prenylation by the O-glucose prenyltransferase PaPT. Cytochrome P450 monooxygenase PaP450-5 then performs hydroxylation at C-19 to yield dideacetyl-fusicoccin A which is acetylated to 3'-O-deacetyl-fusicoccin A by the O-acetyltransferase PaAT-2. Finally, a another acetylation by the O-acetyltransferase PaAT-1 yields fusicoccin A. This Phomopsis amygdali (Fusicoccum amygdali) protein is Fusicoccadiene C-8 hydroxylase.